Reading from the N-terminus, the 670-residue chain is Methionine--tRNA ligase (670 aa).

The short motif at 14–24 (PYANGHLHLGH) is the 'HIGH' region element. Zn(2+)-binding residues include Cys145, Cys148, Cys158, and Cys161. Positions 330–334 (KMSKS) match the 'KMSKS' region motif. Lys333 contacts ATP. The tRNA-binding domain maps to 570 to 670 (DFAKVDLRIA…AGALPGMKVK (101 aa)).

This sequence belongs to the class-I aminoacyl-tRNA synthetase family. MetG type 1 subfamily. As to quaternary structure, homodimer. Zn(2+) serves as cofactor.

The protein resides in the cytoplasm. The catalysed reaction is tRNA(Met) + L-methionine + ATP = L-methionyl-tRNA(Met) + AMP + diphosphate. Functionally, is required not only for elongation of protein synthesis but also for the initiation of all mRNA translation through initiator tRNA(fMet) aminoacylation. This is Methionine--tRNA ligase from Legionella pneumophila (strain Paris).